Reading from the N-terminus, the 959-residue chain is Oxysterol-binding protein-related protein 6 (959 aa).

The disordered stretch occupies residues 1 to 60 (MSSDEKGISPAHKTSTPTHRSASSSTSSQRESRQSIHVLERTASSSTEPSVSRQLLEPEP). Position 2 is an N-acetylserine (Ser-2). Over residues 14–29 (TSTPTHRSASSSTSSQ) the composition is skewed to low complexity. Residues 30–40 (RESRQSIHVLE) are compositionally biased toward basic and acidic residues. Ser-35 bears the Phosphoserine mark. The segment covering 42 to 53 (TASSSTEPSVSR) has biased composition (polar residues). One can recognise a PH domain in the interval 86 to 181 (PDRHEGFMLK…WVSKLRHHRL (96 aa)). 2 positions are modified to phosphoserine: Ser-190 and Ser-290.

Belongs to the OSBP family. As to quaternary structure, homodimer. Interacts with OSBPL3. In terms of tissue distribution, expressed in skin, respiratory epithelium, small intestine epithelium, pancreas, striated muscle, brain, spinal ganglia, and nervous plexus of the intestine (at protein level). In the brain, specifically in the cerebellum, it is expressed in Purkinje and granule cells. Expressed in hepatocytes and macrophages.

The protein resides in the nucleus envelope. The protein localises to the cytoplasm. Its subcellular location is the cytosol. It localises to the endoplasmic reticulum membrane. It is found in the cell membrane. The protein resides in the endosome membrane. Functionally, regulates cellular transport and efflux of cholesterol. Plays a role in phosphatidylinositol-4-phophate (PI4P) turnover at the neuronal membrane. Binds via its PH domain PI4P, phosphatidylinositol-4,5-diphosphate, phosphatidylinositol-3,4,5-triphosphate, and phosphatidic acid. Weakly binds 25-hydroxycholesterol. The protein is Oxysterol-binding protein-related protein 6 (Osbpl6) of Mus musculus (Mouse).